Reading from the N-terminus, the 147-residue chain is Secreted hemophore CSA2 (147 aa).

The signal sequence occupies residues 1–20 (MKFSTILAIPFAIAFANAAA). A CFEM domain is found at 34 to 145 (NPYTIYPPVP…SALDAAATAT (112 aa)). Cystine bridges form between Cys62–Cys102, Cys66–Cys97, Cys76–Cys83, and Cys85–Cys118. Asp80 contacts heme.

It belongs to the RBT5 family. As to quaternary structure, homodimer. The possibility of a transient honotrimer assembly of the holo protein is not ruled out.

It localises to the secreted. Secreted heme-binding protein involved in the utilization of iron from human hemoglobin during hyphal growth. May also play a role in non-hemoglobin iron utilization. Heme transfer occurs between PGA7, RBT5 and CSA2 supporting a model in which the 3 CFEM proteins cooperate in a heme-acquisition system and form a cross-cell wall heme-transfer cascade. The ability to acquire iron from host tissues is a major virulence factor of pathogenic microorganisms. This is Secreted hemophore CSA2 (CSA2) from Candida albicans (strain SC5314 / ATCC MYA-2876) (Yeast).